We begin with the raw amino-acid sequence, 563 residues long: Protein NOXP20 (563 aa).

The tract at residues 1-84 is disordered; sequence MSDDAGDTLA…ANALEPPLNG (84 aa). The segment covering 56-68 has biased composition (low complexity); sequence AAVQGAGAAAIGP. Position 120 is a phosphoserine (Ser120). The segment at 165 to 206 is disordered; it reads VNSGSSEGAQPNTENGVPEITDAATDQGPAESPPTSPSSASR. The segment covering 166–179 has biased composition (polar residues); sequence NSGSSEGAQPNTEN. 2 positions are modified to phosphothreonine: Thr185 and Thr189. Ser196 is modified (phosphoserine). Residue Thr199 is modified to Phosphothreonine. Ser202 and Ser261 each carry phosphoserine. A coiled-coil region spans residues 343 to 367; it reads AAKELENEENQEEQGLEEKGEEFAR. Residues 411–436 form a disordered region; it reads SEEETKKEEKEEKSQDPQEDKKEEKK.

The protein belongs to the FAM114 family.

It is found in the cytoplasm. Its function is as follows. May play a role in neuronal cell development. This is Protein NOXP20 (FAM114A1) from Homo sapiens (Human).